The following is a 153-amino-acid chain: Carbohydrate-binding protein AWN (153 aa).

Residues 1-20 (MKLAAPSLALLLSTATLVSG) form the signal peptide. Ala-21 carries the N-acetylalanine modification. 2 disulfide bridges follow: Cys-29/Cys-50 and Cys-73/Cys-94. Residues 29-130 (CGGVLRDPPG…SPFHIYYYAD (102 aa)) enclose the CUB domain. A heparin-binding region spans residues 93-130 (ICGGISLVFRSSSNIATIKYLRTSGQRASPFHIYYYAD).

The protein belongs to the spermadhesin family. Partial N-acetylation differentiates isoforms AWN-1 (not acetylated) and AWN-2 (acetylated).

It localises to the secreted. In terms of biological role, AWN proteins mediate the binding of boar spermatozoa to component(s) of the egg's zona pellucida by a carbohydrate-binding mechanism. Awn proteins are secretory components of the male accessory glands being coated to the sperm surface at the time of ejaculation. They possess as well heparin-, serine-protease-inhibitor-binding capability. The polypeptide is Carbohydrate-binding protein AWN (Sus scrofa (Pig)).